The primary structure comprises 440 residues: Protein ABHD8 (440 aa).

The segment at 123–158 is disordered; it reads DPAGSDGRSAPGSGSGSGSGSGSGGRRRRARRPKRT. Residues 124–134 are compositionally biased toward low complexity; the sequence is PAGSDGRSAPG. The span at 135 to 146 shows a compositional bias: gly residues; the sequence is SGSGSGSGSGSG. The segment covering 147 to 158 has biased composition (basic residues); that stretch reads GRRRRARRPKRT. The region spanning 178–280 is the AB hydrolase-1 domain; it reads VLFFIHGVGG…HKVIMINGGG (103 aa). Residues Ser253, Asp371, and His399 each act as charge relay system in the active site.

Belongs to the AB hydrolase superfamily. As to quaternary structure, interacts with NLRP3 (via NACHT and LLR domains); this interaction is enhanced in the presence of NLRP3 inflammasome inducers, such as ATP, nigericin, silica, or alum. Interacts with ZDHHC12.

It localises to the cytoplasm. In terms of biological role, negatively regulates NLRP3-driven inflammation. Promotes NLRP3 degradation through the chaperone-mediated autophagy (CMA) pathway, hence attenuating inflammasome activation and IL1B secretion. Acts by recruiting palmitoyltransferase ZDHHC12 to NLRP3, facilitating NLRP3 palmitoylation and subsequent degradation. The sequence is that of Protein ABHD8 from Macaca fascicularis (Crab-eating macaque).